A 531-amino-acid chain; its full sequence is Importin subunit alpha-2 (531 aa).

A compositionally biased stretch (polar residues) spans 1–10; sequence MTLTETSLSH. Residues 1–88 are disordered; sequence MTLTETSLSH…ISHQQSSTRL (88 aa). The IBB domain maps to 5-67; sequence ETSLSHNAEE…RNIVDVDEGG (63 aa). Composition is skewed to basic and acidic residues over residues 11–20 and 29–50; these read NAEEGKDEGG and TKHE…KQKG. Residues 62-75 are compositionally biased toward acidic residues; sequence DVDEGGNSESELEE. ARM repeat units follow at residues 122–161, 164–203, 250–290, 293–331, 334–374, 377–416, and 420–459; these read NPPI…NIVS, TEQT…NIAG, KNPH…YLTD, DEQI…NVAT, DSLT…NIIA, QKQI…NLAQ, and NRQV…TLML. Positions 511 to 531 are disordered; that stretch reads DDAGEKESHENADPQDNKWSF. Residues 515–531 show a composition bias toward basic and acidic residues; sequence EKESHENADPQDNKWSF.

The protein belongs to the importin alpha family. Forms a complex with an importin beta subunit. Interacts with akir-1. As to expression, germline tissues. Expressed exclusively in germ line cells from the early embryonic through adult stages.

It localises to the cytoplasm. It is found in the nucleus. The protein localises to the nucleus envelope. Functionally, nuclear transport receptor that mediates nuclear import of proteins, and which is involved in sister chromatid cohesion. Binds specifically and directly to substrates containing either a simple or bipartite nuclear localization signals (NLS) motif. Promotes docking of import substrates to the nuclear envelope. Together with akir-1 adapter, required for the import and load of cohesin complex proteins in meiotic nuclei. The polypeptide is Importin subunit alpha-2 (Caenorhabditis elegans).